A 178-amino-acid chain; its full sequence is Large ribosomal subunit protein bL19 (178 aa).

The protein belongs to the bacterial ribosomal protein bL19 family.

Functionally, this protein is located at the 30S-50S ribosomal subunit interface and may play a role in the structure and function of the aminoacyl-tRNA binding site. The protein is Large ribosomal subunit protein bL19 of Rhizobium etli (strain ATCC 51251 / DSM 11541 / JCM 21823 / NBRC 15573 / CFN 42).